The following is a 122-amino-acid chain: Putative MOB kinase activator-like 2B (122 aa).

2 residues coordinate Zn(2+): H69 and H74.

Belongs to the MOB1/phocein family.

It is found in the nucleus. The protein resides in the cytoplasm. It localises to the cytoskeleton. The protein localises to the phragmoplast. The protein is Putative MOB kinase activator-like 2B of Arabidopsis thaliana (Mouse-ear cress).